Consider the following 415-residue polypeptide: MYFYNLVKNTDPEIAEAIKSELKRQQNKIELIASENFVSIAVMAAMGSPLTNKYAEGYPGKRYYGGCEYIDVVESIAIERAKKLFGAEHANVQPHSGAQANMAVYFAVLNPGDTILGMNLSHGGHLTHGSPVNFSGKLYNIISYGVDPETETINYDEVLKLAKEHRPKLILAGASAYPRVIDFKKFREIADEVGAYLMVDMAHIAGLVAAGLHPSPVEYADFVTTTTHKTLRGPRGGLILCKEKYAKLIDKSIFPGIQGGPLEHVIAAKAVALKEAMTEEFKNYQVQILKNAKALSTRLIERGFRLVSGGTDNHLMLVDLRNKGITGKDAEKILDEHNITCNKNAVPFDTQSPMITSGIRLGTPAVTTRGFKEGDMLEVADIIHDALTNSDTKENILIRVKALCEKHPLYKEFDE.

(6S)-5,6,7,8-tetrahydrofolate contacts are provided by residues leucine 120 and 124 to 126; that span reads GHL. Lysine 229 bears the N6-(pyridoxal phosphate)lysine mark.

This sequence belongs to the SHMT family. As to quaternary structure, homodimer. Requires pyridoxal 5'-phosphate as cofactor.

It is found in the cytoplasm. The catalysed reaction is (6R)-5,10-methylene-5,6,7,8-tetrahydrofolate + glycine + H2O = (6S)-5,6,7,8-tetrahydrofolate + L-serine. It participates in one-carbon metabolism; tetrahydrofolate interconversion. It functions in the pathway amino-acid biosynthesis; glycine biosynthesis; glycine from L-serine: step 1/1. Functionally, catalyzes the reversible interconversion of serine and glycine with tetrahydrofolate (THF) serving as the one-carbon carrier. This reaction serves as the major source of one-carbon groups required for the biosynthesis of purines, thymidylate, methionine, and other important biomolecules. Also exhibits THF-independent aldolase activity toward beta-hydroxyamino acids, producing glycine and aldehydes, via a retro-aldol mechanism. The sequence is that of Serine hydroxymethyltransferase from Caldicellulosiruptor bescii (strain ATCC BAA-1888 / DSM 6725 / KCTC 15123 / Z-1320) (Anaerocellum thermophilum).